The chain runs to 1098 residues: NACHT, LRR and PYD domains-containing protein 5 (1098 aa).

In terms of domain architecture, Pyrin spans 1-97 (MREAKIAPLS…SEMARDEMKK (97 aa)). A disordered region spans residues 104–131 (SEDSAPTKTDQGPSMKEVPGPREDPQDS). Basic and acidic residues predominate over residues 122 to 131 (PGPREDPQDS). Positions 180-503 (LTVVLHGPPG…ALFYVLRGVE (324 aa)) constitute an NACHT domain. 186–193 (GPPGVGKS) is an ATP binding site. 7 LRR repeats span residues 851-871 (GLTHLSLSGDELGSKGMSLLC), 880-900 (GLQKLALNACSLDVAGCGFLA), 908-928 (HLTHLSLSMNPLEDPGMNLLC), 937-958 (PLRDLDLVNCRLTASCCKSLSN), 965-985 (RLRSLDLAANALGDEGIAALC), 993-1013 (TLTRLGLEACGLTSEGCKALS), and 1021-1041 (HLASLNLMRNDLGPRGMTTLC).

It belongs to the NLRP family. As to quaternary structure, component of the subcortical maternal complex (SCMC), at least composed of NLRP5, KHDC3, OOEP, and TLE6. Within the complex, interacts with OOEP, KHDC3 and TLE6. The SCMC may facilitate translocation of its components between the nuclear and cytoplasmic compartments. As part of the SCMC interacts with the SCMC-associated protein ZBED3. As part of the SCMC interacts with the SCMC-associated protein CFL1/Cofilin-1. Interacts with PRKCE. Interacts with TUBB3 at cytoskeleton microtubules. In terms of processing, phosphorylated by PRKCE. Oocyte-specific.

It localises to the cytoplasm. Its subcellular location is the cytoplasmic vesicle. The protein resides in the secretory vesicle. It is found in the cortical granule. The protein localises to the mitochondrion. It localises to the nucleus. Its subcellular location is the nucleolus. The protein resides in the golgi apparatus. Its function is as follows. Component of the subcortical maternal complex (SCMC), a multiprotein complex that plays a key role in early embryonic development. The SCMC complex is a structural constituent of cytoplasmic lattices, which consist in fibrous structures found in the cytoplasm of oocytes and preimplantation embryos. They are required to store maternal proteins critical for embryonic development, such as proteins that control epigenetic reprogramming of the preimplantation embryo, and prevent their degradation or activation. Required for the localization of cortical granules to the cortex of oocytes, via association with the cortical actin scaffold. Required for cortical actin clearance prior to oocyte exocytosis and prevention of polyspermy. Involved in regulating post-fertilization Ca(2+) release and endoplasmic reticulum storage (ER) storage via regulation of cellular localization. May be involved in the localization of mitochondria to the cytoplasm and perinuclear region in oocytes and early stage embryos, independent of its role in CPL formation. This chain is NACHT, LRR and PYD domains-containing protein 5 (NLRP5), found in Bos taurus (Bovine).